The sequence spans 341 residues: MKAEVREMKRQFGEIRLFPETLDDLWHLSHLVGPGDLVFATTFRSVEAATDKLRPEKVEKRPVRLGIWVEKVEFHQHTNRLRIAGIIESGVDVAAHHTLNVEAGFEISVVKRWRPVDCERIRRAVDASAYGVVHVVSVEEGEAQIYRLRQFGPEWVTTVTAGSSKGADTGTRSALFEKTLDTVAAVTGPLVVAGPGFVKDEFAEYVKVRAPDLAGRMVAVETRRIGRGAVQEVIGQGILDRLLGDLHLAREVALMDEVLVRIATEGAVAYGIDEVRKAVAYGAAETVLVADTLLRDDEATGVIEQAERVNATVVVLSTEFEPGERLDAIGGAAALLRYKIE.

This sequence belongs to the eukaryotic release factor 1 family. Pelota subfamily. Monomer. The cofactor is a divalent metal cation.

It is found in the cytoplasm. Its function is as follows. May function in recognizing stalled ribosomes, interact with stem-loop structures in stalled mRNA molecules, and effect endonucleolytic cleavage of the mRNA. May play a role in the release non-functional ribosomes and degradation of damaged mRNAs. Has endoribonuclease activity. The sequence is that of Protein pelota homolog from Methanoculleus marisnigri (strain ATCC 35101 / DSM 1498 / JR1).